The primary structure comprises 655 residues: Spastin (655 aa).

At 1–58 (MLFDLINSFLKNGINNSNNNNNNNNNKNNFYNSLEDDDYLLNNQTTKVSLYLYFFIFA) the chain is on the cytoplasmic side. The segment at residues 59–79 (FMFLVVDLIMLYYKHRENIES) is an intramembrane region (helical). Topologically, residues 80 to 655 (RETDLSLKLN…EKWNQKFGTI (576 aa)) are cytoplasmic. Over residues 102 to 140 (KSSPTTSTTTTTITPTTTSSSQLRQPSTPKTTTKTINSP) the composition is skewed to low complexity. A disordered region spans residues 102-151 (KSSPTTSTTTTTITPTTTSSSQLRQPSTPKTTTKTINSPPSTPKSPPPLP). The segment covering 141–151 (PSTPKSPPPLP) has biased composition (pro residues). The MIT domain maps to 169 to 232 (LNEAKSQIDS…KRAEYLKNEL (64 aa)). Positions 261–325 (EQQQQQQQQS…TITSPGNKYG (65 aa)) are disordered. Residues 262-320 (QQQQQQQQSSSTYRNSLNLSSSKSNSTINNRHSISSLSSLNSTTATTTTPSNTSTITSP) show a composition bias toward low complexity. 424-431 (GPPGNGKT) is an ATP binding site.

It belongs to the AAA ATPase family. Spastin subfamily. In terms of assembly, homohexamer. The homohexamer is stabilized by ATP-binding. The homohexamer may adopt a ring conformation through which microtubules pass prior to being severed. Interacts with microtubules.

The protein localises to the membrane. It is found in the cytoplasm. Its subcellular location is the cytoskeleton. It localises to the microtubule organizing center. The protein resides in the centrosome. It catalyses the reaction n ATP + n H2O + a microtubule = n ADP + n phosphate + (n+1) alpha/beta tubulin heterodimers.. Its function is as follows. ATP-dependent microtubule severing protein. Microtubule severing may promote reorganization of cellular microtubule arrays and the release of microtubules from the microtubule organizing center following nucleation. The protein is Spastin of Dictyostelium discoideum (Social amoeba).